Consider the following 387-residue polypeptide: Succinate--CoA ligase [ADP-forming] subunit beta (387 aa).

One can recognise an ATP-grasp domain in the interval 9-244 (KAIFADNGIP…ITEENPAERE (236 aa)). ATP is bound by residues lysine 46, 53 to 55 (GRG), glutamate 99, alanine 102, and glutamate 107. Positions 199 and 213 each coordinate Mg(2+). Substrate-binding positions include asparagine 264 and 321–323 (GIV).

It belongs to the succinate/malate CoA ligase beta subunit family. As to quaternary structure, heterotetramer of two alpha and two beta subunits. The cofactor is Mg(2+).

The enzyme catalyses succinate + ATP + CoA = succinyl-CoA + ADP + phosphate. It catalyses the reaction GTP + succinate + CoA = succinyl-CoA + GDP + phosphate. It participates in carbohydrate metabolism; tricarboxylic acid cycle; succinate from succinyl-CoA (ligase route): step 1/1. Succinyl-CoA synthetase functions in the citric acid cycle (TCA), coupling the hydrolysis of succinyl-CoA to the synthesis of either ATP or GTP and thus represents the only step of substrate-level phosphorylation in the TCA. The beta subunit provides nucleotide specificity of the enzyme and binds the substrate succinate, while the binding sites for coenzyme A and phosphate are found in the alpha subunit. This Campylobacter jejuni subsp. jejuni serotype O:6 (strain 81116 / NCTC 11828) protein is Succinate--CoA ligase [ADP-forming] subunit beta.